The chain runs to 657 residues: Keratinocyte proline-rich protein (657 aa).

3 disordered regions span residues 285 to 320 (QGTY…SPPR), 425 to 493 (HPFP…PSPE), and 517 to 568 (QPVP…CGQP). The span at 292-302 (TSQRRSQSTSR) shows a compositional bias: low complexity. Residues 434–444 (QHLDRSPESSR) are compositionally biased toward basic and acidic residues. Serine 442 carries the phosphoserine modification. 3 stretches are compositionally biased toward pro residues: residues 449–493 (VPAP…PSPE), 517–530 (QPVP…VPRP), and 539–561 (GPRP…PCSS).

The protein resides in the cytoplasm. In Mus musculus (Mouse), this protein is Keratinocyte proline-rich protein.